The sequence spans 419 residues: Large ribosomal subunit protein uL4 (419 aa).

Alanine 2 is subject to N-acetylalanine. Lysine 14 is modified (N6-acetyllysine). Arginine 97 carries the omega-N-methylarginine modification. Lysine 106 bears the N6-acetyllysine mark. Lysine 239 participates in a covalent cross-link: Glycyl lysine isopeptide (Lys-Gly) (interchain with G-Cter in SUMO2). Lysine 259 bears the N6-acetyllysine mark. Threonine 266 carries the phosphothreonine modification. Phosphoserine is present on residues serine 290 and serine 295. Arginine 300 carries the post-translational modification Citrulline. Residue lysine 327 forms a Glycyl lysine isopeptide (Lys-Gly) (interchain with G-Cter in SUMO2) linkage. N6-acetyllysine occurs at positions 333 and 353. N6-acetyllysine; alternate is present on lysine 364. A Glycyl lysine isopeptide (Lys-Gly) (interchain with G-Cter in SUMO1); alternate cross-link involves residue lysine 364. A compositionally biased stretch (basic and acidic residues) spans 364 to 379 (KSEKVVPEKGTADKKP). A disordered region spans residues 364–419 (KSEKVVPEKGTADKKPAVGKKGKKVDAKKQKPAGKKVVAKKPAEKKPTTEEKKPAA). Serine 365 carries the phosphoserine modification. Residues 393 to 402 (QKPAGKKVVA) are compositionally biased toward basic residues. A compositionally biased stretch (basic and acidic residues) spans 404-419 (KPAEKKPTTEEKKPAA).

It belongs to the universal ribosomal protein uL4 family. As to quaternary structure, component of the large ribosomal subunit. May bind IPO9 with low affinity. Interacts with RBM3. Citrullinated by PADI4.

Its subcellular location is the cytoplasm. Functionally, component of the large ribosomal subunit. The ribosome is a large ribonucleoprotein complex responsible for the synthesis of proteins in the cell. This Mus musculus (Mouse) protein is Large ribosomal subunit protein uL4 (Rpl4).